Consider the following 380-residue polypeptide: NADPH quinone oxidoreductase (380 aa).

Residues 1-17 (MSSFLSKRFISTTQRAM) constitute a mitochondrion transit peptide.

This sequence belongs to the zinc-containing alcohol dehydrogenase family. Quinone oxidoreductase subfamily. As to quaternary structure, homodimer.

Its subcellular location is the mitochondrion. The catalysed reaction is a quinone + NADH + H(+) = a quinol + NAD(+). It catalyses the reaction a quinone + NADPH + H(+) = a quinol + NADP(+). Functionally, NADPH quinone oxidoreductase that efficiently reduces 1,4-benzoquinone, whereas no activities are found for menadiones and methoxyquinones. The polypeptide is NADPH quinone oxidoreductase (Kluyveromyces marxianus (Yeast)).